The following is a 316-amino-acid chain: Small ribosomal subunit biogenesis GTPase RsgA (316 aa).

A disordered region spans residues 1 to 20 (MSKLSHQQQRRIHNHRQNKL). The span at 8 to 18 (QQRRIHNHRQN) shows a compositional bias: basic residues. Positions 92-251 (AGKLKPVASN…IIDTPGVRGF (160 aa)) constitute a CP-type G domain. GTP-binding positions include 139–142 (NKSD) and 193–201 (GQSGVGKSS). Cys-275, Cys-280, His-282, and Cys-288 together coordinate Zn(2+).

It belongs to the TRAFAC class YlqF/YawG GTPase family. RsgA subfamily. In terms of assembly, monomer. Associates with 30S ribosomal subunit, binds 16S rRNA. Requires Zn(2+) as cofactor.

The protein localises to the cytoplasm. Functionally, one of several proteins that assist in the late maturation steps of the functional core of the 30S ribosomal subunit. Helps release RbfA from mature subunits. May play a role in the assembly of ribosomal proteins into the subunit. Circularly permuted GTPase that catalyzes slow GTP hydrolysis, GTPase activity is stimulated by the 30S ribosomal subunit. This is Small ribosomal subunit biogenesis GTPase RsgA from Dichelobacter nodosus (strain VCS1703A).